A 284-amino-acid chain; its full sequence is Tropomyosin alpha-1 chain (284 aa).

The tract at residues 1-38 is disordered; that stretch reads MDAIKKKMQMLKLDKENALDRAEQAEADKKAAEERSKQ. The stretch at 1-284 forms a coiled coil; it reads MDAIKKKMQM…DHALNDMTSI (284 aa). Basic and acidic residues predominate over residues 12-38; that stretch reads KLDKENALDRAEQAEADKKAAEERSKQ.

The protein belongs to the tropomyosin family. Homodimer. Heterodimer of an alpha (TPM1, TPM3 or TPM4) and a beta (TPM2) chain. Interacts with HRG (via the HRR domain); the interaction contributes to the antiangiogenic properties of the histidine/proline-rich region (HRR) of HRG.

Its subcellular location is the cytoplasm. The protein localises to the cytoskeleton. In terms of biological role, binds to actin filaments in muscle and non-muscle cells. Plays a central role, in association with the troponin complex, in the calcium dependent regulation of vertebrate striated muscle contraction. Smooth muscle contraction is regulated by interaction with caldesmon. In non-muscle cells is implicated in stabilizing cytoskeleton actin filaments. The polypeptide is Tropomyosin alpha-1 chain (TPM1) (Coturnix japonica (Japanese quail)).